Here is a 222-residue protein sequence, read N- to C-terminus: uncharacterized protein (222 aa).

2 consecutive transmembrane segments (helical) span residues 22-42 and 189-209; these read IRVILFIMAICMAMVLLFLYI and AICLALGFFLSIVISVMFCLV.

Its subcellular location is the cell membrane. This is an uncharacterized protein from Escherichia coli (strain K12).